Consider the following 352-residue polypeptide: Holliday junction branch migration complex subunit RuvB (352 aa).

Residues 1–42 (MAIVSSSAGRADSQPPAAKSRVVDASPLPEEASPAREDGLRP) form a disordered region. A large ATPase domain (RuvB-L) region spans residues 13 to 201 (SQPPAAKSRV…FGLIQRLEFY (189 aa)). The segment covering 33–42 (SPAREDGLRP) has biased composition (basic and acidic residues). Residues Leu40, Arg41, Gly82, Lys85, Thr86, Thr87, Arg191, Tyr201, and Arg238 each contribute to the ATP site. Thr86 contacts Mg(2+). The small ATPAse domain (RuvB-S) stretch occupies residues 202 to 273 (GLEDLQAIVE…LVDEALTLHR (72 aa)). Residues 276–352 (ARGLDASDRR…RRHLGWPELP (77 aa)) are head domain (RuvB-H). 2 residues coordinate DNA: Arg331 and Arg336.

This sequence belongs to the RuvB family. As to quaternary structure, homohexamer. Forms an RuvA(8)-RuvB(12)-Holliday junction (HJ) complex. HJ DNA is sandwiched between 2 RuvA tetramers; dsDNA enters through RuvA and exits via RuvB. An RuvB hexamer assembles on each DNA strand where it exits the tetramer. Each RuvB hexamer is contacted by two RuvA subunits (via domain III) on 2 adjacent RuvB subunits; this complex drives branch migration. In the full resolvosome a probable DNA-RuvA(4)-RuvB(12)-RuvC(2) complex forms which resolves the HJ.

It localises to the cytoplasm. It catalyses the reaction ATP + H2O = ADP + phosphate + H(+). In terms of biological role, the RuvA-RuvB-RuvC complex processes Holliday junction (HJ) DNA during genetic recombination and DNA repair, while the RuvA-RuvB complex plays an important role in the rescue of blocked DNA replication forks via replication fork reversal (RFR). RuvA specifically binds to HJ cruciform DNA, conferring on it an open structure. The RuvB hexamer acts as an ATP-dependent pump, pulling dsDNA into and through the RuvAB complex. RuvB forms 2 homohexamers on either side of HJ DNA bound by 1 or 2 RuvA tetramers; 4 subunits per hexamer contact DNA at a time. Coordinated motions by a converter formed by DNA-disengaged RuvB subunits stimulates ATP hydrolysis and nucleotide exchange. Immobilization of the converter enables RuvB to convert the ATP-contained energy into a lever motion, pulling 2 nucleotides of DNA out of the RuvA tetramer per ATP hydrolyzed, thus driving DNA branch migration. The RuvB motors rotate together with the DNA substrate, which together with the progressing nucleotide cycle form the mechanistic basis for DNA recombination by continuous HJ branch migration. Branch migration allows RuvC to scan DNA until it finds its consensus sequence, where it cleaves and resolves cruciform DNA. This Prochlorococcus marinus (strain MIT 9303) protein is Holliday junction branch migration complex subunit RuvB.